Reading from the N-terminus, the 506-residue chain is Maturase K (506 aa).

This sequence belongs to the intron maturase 2 family. MatK subfamily.

Its subcellular location is the plastid. The protein localises to the chloroplast. Functionally, usually encoded in the trnK tRNA gene intron. Probably assists in splicing its own and other chloroplast group II introns. The chain is Maturase K from Empetrum nigrum (Black crowberry).